Reading from the N-terminus, the 155-residue chain is Acetylaranotin biosynthesis cluster protein L (155 aa).

Its pathway is mycotoxin biosynthesis. In terms of biological role, nonribosomal peptide synthetase; part of the gene cluster that mediates the biosynthesis of acetylaranotin, a member of the epipolythiodioxopiperazine (ETP) class of toxins characterized by a disulfide-bridged cyclic dipeptide. The first step of acetylaranotin biosynthesis is performed by the NRPS ataP which produces diketopiperazine cyclo-L-Phe-L-Phe via the condensation of 2 phenylalanines (L-Phe). The ataC domain of ataTC then catalyzes the formation of bishydroxylation of cyclo-L-Phe-L-Phe. The glutathione S-transferase domain ataG in ataIMG further catalyzes the conjugation of two glutathiones to the bishydroxylated intermediate. Next, the dipeptidase ataJ removes the Glu residues. The following step is performed by the carbon sulfur lyase domain ataI of ataIMG which may convert the bis-cysteinyl adduct to yield an epidithiol intermediate. The ataT domain from ataTC then catalyzes the oxidation of the free dithiols, followed by a cyclization step catalyzed by the cytochrome P450 ataF. AtaF probably acts as an epoxidase to promote a dual epoxidation formation at C8 and C9 along with C8' and C9', followed by the spontaneous nucleophilic attack of the amide nitrogens N10 and N10' to yield an intermediate with the pyrrolidine partial structure. The final steps of acetylaranotin biosynthesis involve the acetylation and ring rearrangement of an epitetrathiodiketopiperazine intermediate to produce acetylaranotin. AtaH probably catalyzes the acetylation of epitetrathiodiketopiperazine to produce a diacetate and ataY is responsible for the formation of the dihydrooxepin moiety that converts the diacetate intermediate to acetylaranotin via acetylapoaranotin. Both enzymes could function independently in the absence of the other. The specific function of ataL within the pathway has still to be determined. The acetylaranotin bis-thiomethyltransferase ataS located outside of acetylaranotin gene cluster is the main thiomethyltransferase responsible for converting acetylaranotin and its related intermediates to their methylated forms. In Aspergillus terreus (strain NIH 2624 / FGSC A1156), this protein is Acetylaranotin biosynthesis cluster protein L.